The chain runs to 163 residues: MASTSSFDIVSDFDRQELVNAIDQAEREIKARYDLKDSNTSLELGEDTITINTSSQFSLDAVHTVLQTKAAKRNLSLKIFDFGKVESASGNRVRQEVKLQKGISQENAKKITKLIKDEFKKVQSSIQGDAVRVSAKSKDELQAVMQRLKAEDFPMPLQFTNYR.

Belongs to the YajQ family.

Nucleotide-binding protein. The sequence is that of Nucleotide-binding protein Tery_2743 from Trichodesmium erythraeum (strain IMS101).